A 467-amino-acid chain; its full sequence is Uronate isomerase (467 aa).

This sequence belongs to the metallo-dependent hydrolases superfamily. Uronate isomerase family.

It catalyses the reaction D-glucuronate = D-fructuronate. The catalysed reaction is aldehydo-D-galacturonate = keto-D-tagaturonate. It functions in the pathway carbohydrate metabolism; pentose and glucuronate interconversion. In Geobacillus thermodenitrificans (strain NG80-2), this protein is Uronate isomerase.